A 325-amino-acid polypeptide reads, in one-letter code: Heat-inducible transcription repressor HrcA (325 aa).

It belongs to the HrcA family.

Its function is as follows. Negative regulator of class I heat shock genes (grpE-dnaK-dnaJ and groELS operons). Prevents heat-shock induction of these operons. In Staphylococcus aureus (strain JH1), this protein is Heat-inducible transcription repressor HrcA.